The sequence spans 461 residues: MSTNTISHVGDLNDEQALSFFGTDGIRGKSQTFLTNSLVSQIGYWCNHVLLGEGPILIGQDSRASSERIASALAHGLATKNREIWLLGLCPTPAVSHLIKKYNASGGLMISASHNPPEDNGIKIFDKTGEKISLEKQIFIDNKLKRKVLIPICKDKDNCINRNDLLKDYKNSLLNTVDKESLIDIPIVLDLCWGSASSCGEKLFKALGANVISINAIPDGEKINVNCGSTHLEHIKKVVLESNAQMGFAFDGDADRMIAIDGKGRVIDGDHSLYLWGSSLQDKNMLPEQRLVTTVMSNLGLEKAWLNRGGKLTRTPVGDQHVHKAMLTNKASLGGEQSGHILSTLNDLCGDGLLAAIQLSSICNRKGILLSEWRDQSFKPYPQKLISVPIAKHITQNYLNKSEKFRLSIAEAELDLGKEGRVFIRKSGTEPLVRVMVESIDKLLVESLTTKIAKIALEEFN.

S113 acts as the Phosphoserine intermediate in catalysis. Residues S113, D251, D253, and D255 each coordinate Mg(2+). At S113 the chain carries Phosphoserine.

This sequence belongs to the phosphohexose mutase family. Requires Mg(2+) as cofactor. In terms of processing, activated by phosphorylation.

It catalyses the reaction alpha-D-glucosamine 1-phosphate = D-glucosamine 6-phosphate. Functionally, catalyzes the conversion of glucosamine-6-phosphate to glucosamine-1-phosphate. In Prochlorococcus marinus (strain SARG / CCMP1375 / SS120), this protein is Phosphoglucosamine mutase.